Reading from the N-terminus, the 187-residue chain is Corticoliberin (187 aa).

Residues 1 to 19 (MRLRLLVSAGMLLVALSSC) form the signal peptide. Positions 20 to 144 (LPCRALLSRG…HQGALERERR (125 aa)) are excised as a propeptide. 2 disordered regions span residues 75–94 (AARL…SRPS) and 114–146 (QRSL…RRSE). Positions 117–129 (LDSRAEPAERGAE) are enriched in basic and acidic residues. The residue at position 185 (isoleucine 185) is an Isoleucine amide.

The protein belongs to the sauvagine/corticotropin-releasing factor/urotensin I family. Interacts (via C-terminus) with CRFR1 (via N-terminal extracellular domain). As to expression, expressed in parvocellular paraventricular nucleus of the hypothalamus and in medial accessory olivary nucleus.

It localises to the secreted. Functionally, hormone regulating the release of corticotropin from pituitary gland. Induces NLRP6 in intestinal epithelial cells, hence may influence gut microbiota profile. This Mus musculus (Mouse) protein is Corticoliberin (Crh).